The chain runs to 389 residues: UDP-D-apiose/UDP-D-xylose synthase 1 (389 aa).

Phe-28, Ile-29, Asp-49, Asn-76, Ile-77, and Leu-96 together coordinate NAD(+). Residues Tyr-105, Thr-139, Glu-141, Arg-182, and Tyr-185 each coordinate UDP-alpha-D-glucuronate. Tyr-185 and Lys-189 together coordinate NAD(+). Tyr-185 functions as the Proton acceptor in the catalytic mechanism. Asn-214 serves as a coordination point for UDP-alpha-D-glucuronate. The NAD(+) site is built by Trp-215 and Arg-235. Residues Lys-251, Val-253, Arg-260, Tyr-331, Tyr-335, Asp-337, and Arg-341 each coordinate UDP-alpha-D-glucuronate.

This sequence belongs to the NAD(P)-dependent epimerase/dehydratase family. Homodimer and heterodimer with AXS2. The cofactor is NAD(+). Widely expressed with stronger expression in leaves and stems, and lower levels in flowers, siliques, pistils, pollen and roots.

It is found in the cytoplasm. The enzyme catalyses UDP-alpha-D-glucuronate + H(+) = UDP-alpha-D-xylose + CO2. It carries out the reaction UDP-alpha-D-glucuronate + H(+) = UDP-alpha-D-apiose + CO2. With respect to regulation, inhibited by UDP-D-galacturonate. Its function is as follows. Together with AXS2, catalyzes the conversion of UDP-D-glucuronate into a mixture of UDP-D-apiose (UDP-Api) as the main product and UDP-D-xylose to a lesser extent, via a cycle of oxidation and reduction. D-Apiose (3-C-hydroxymethyl-d-erythrose) is the only plant cell wall monosaccharide with a branched carbon skeleton and is found in rhamnogalacturonan II (RG-II), apiogalacturonan, and several apioglycosides. This is UDP-D-apiose/UDP-D-xylose synthase 1 from Arabidopsis thaliana (Mouse-ear cress).